Consider the following 72-residue polypeptide: Translation initiation factor IF-1 (72 aa).

The region spanning 1-72 (MAKEDVIEVE…NRGRIIYRFK (72 aa)) is the S1-like domain.

This sequence belongs to the IF-1 family. Component of the 30S ribosomal translation pre-initiation complex which assembles on the 30S ribosome in the order IF-2 and IF-3, IF-1 and N-formylmethionyl-tRNA(fMet); mRNA recruitment can occur at any time during PIC assembly.

The protein resides in the cytoplasm. Functionally, one of the essential components for the initiation of protein synthesis. Stabilizes the binding of IF-2 and IF-3 on the 30S subunit to which N-formylmethionyl-tRNA(fMet) subsequently binds. Helps modulate mRNA selection, yielding the 30S pre-initiation complex (PIC). Upon addition of the 50S ribosomal subunit IF-1, IF-2 and IF-3 are released leaving the mature 70S translation initiation complex. The sequence is that of Translation initiation factor IF-1 from Syntrophomonas wolfei subsp. wolfei (strain DSM 2245B / Goettingen).